The following is an 840-amino-acid chain: Microcephalin (840 aa).

Positions 1 to 93 (MAAHILKDVV…AHIDESLFPA (93 aa)) constitute a BRCT 1 domain. The tract at residues 184–206 (KEKRENLSPSSSQMIQQSHDNPS) is disordered. Over residues 190 to 206 (LSPSSSQMIQQSHDNPS) the composition is skewed to polar residues. Phosphoserine occurs at positions 279, 287, 296, and 333. Disordered stretches follow at residues 313–379 (PDQK…SIRR) and 418–437 (PDNL…QLPS). Phosphothreonine is present on Thr335. The span at 355 to 378 (KRQRVSHGSHSPSKGKSKRKRSIR) shows a compositional bias: basic residues. Polar residues predominate over residues 427–437 (ENLPPTSQLPS). Ser552 carries the post-translational modification Phosphoserine. Positions 562-586 (LKSTQNKGTTSKISNSSEGEAQSEH) are disordered. Residues 563 to 581 (KSTQNKGTTSKISNSSEGE) show a composition bias toward polar residues. 2 BRCT domains span residues 644–734 (SGRG…PFEL) and 755–837 (YRGT…NYLL).

Interacts with CDC27 and maybe other components of the APC/C complex. Interacts with histone variant H2AX under DNA damage conditions.

Its subcellular location is the cytoplasm. It localises to the cytoskeleton. It is found in the microtubule organizing center. The protein resides in the centrosome. In terms of biological role, implicated in chromosome condensation and DNA damage induced cellular responses. May play a role in neurogenesis and regulation of the size of the cerebral cortex. This chain is Microcephalin, found in Hylobates lar (Lar gibbon).